The chain runs to 416 residues: MPYNFCLPSLSCRTSCSSRPCVPPSCHSCTLPGACNIPANVSNCNWFCEGSFNGSEKETMQFLNDRLASYLEKVRQLERDNAELENLIRERSQQQEPLLCPSYQSYFKTIEELQQKILCTKSENARLVVQIDNAKLAADDFRTKYQTELSLRQLVESDINGLRRILDELTLCKSDLEAQVESLKEELLCLKSNHEQEVNTLRCQLGDRLNVEVDAAPTVDLNRVLNETRSQYEALVETNRREVEQWFTTQTEELNKQVVSSSEQLQSYQAEIIELRRTVNALEIELQAQHNLRDSLENTLTESEARYSSQLSQVQSLITNVESQLAEIRSDLERQNQEYQVLLDVRARLECEINTYRSLLESEDCNLPSNPCATTNACSKPIGPCLSNPCTPCVPPAPCTPCAPRPRCGPCNSFVR.

The segment at 1–56 is head; it reads MPYNFCLPSLSCRTSCSSRPCVPPSCHSCTLPGACNIPANVSNCNWFCEGSFNGSE. An IF rod domain is found at 56–367; that stretch reads EKETMQFLND…SLLESEDCNL (312 aa). The coil 1A stretch occupies residues 57–91; that stretch reads KETMQFLNDRLASYLEKVRQLERDNAELENLIRER. The interval 92 to 102 is linker 1; sequence SQQQEPLLCPS. Residues 103-203 form a coil 1B region; sequence YQSYFKTIEE…HEQEVNTLRC (101 aa). A linker 12 region spans residues 204–219; the sequence is QLGDRLNVEVDAAPTV. The interval 220-363 is coil 2; it reads DLNRVLNETR…NTYRSLLESE (144 aa). The tail stretch occupies residues 364 to 416; that stretch reads DCNLPSNPCATTNACSKPIGPCLSNPCTPCVPPAPCTPCAPRPRCGPCNSFVR.

This sequence belongs to the intermediate filament family.

This is Keratin, type I cuticular Ha1 (KRT31) from Pan troglodytes (Chimpanzee).